A 377-amino-acid chain; its full sequence is DNA primase small subunit PriS (377 aa).

Catalysis depends on residues D99, D101, and D274.

This sequence belongs to the eukaryotic-type primase small subunit family. Heterodimer of a small subunit (PriS) and a large subunit (PriL). It depends on Mg(2+) as a cofactor. Mn(2+) serves as cofactor.

Functionally, catalytic subunit of DNA primase, an RNA polymerase that catalyzes the synthesis of short RNA molecules used as primers for DNA polymerase during DNA replication. The small subunit contains the primase catalytic core and has DNA synthesis activity on its own. Binding to the large subunit stabilizes and modulates the activity, increasing the rate of DNA synthesis while decreasing the length of the DNA fragments, and conferring RNA synthesis capability. The DNA polymerase activity may enable DNA primase to also catalyze primer extension after primer synthesis. May also play a role in DNA repair. The protein is DNA primase small subunit PriS of Staphylothermus marinus (strain ATCC 43588 / DSM 3639 / JCM 9404 / F1).